A 420-amino-acid chain; its full sequence is Ammonia monooxygenase beta subunit (420 aa).

Residues 1–25 (MGIKNLYKRGVMGLYGVAYAVAALA) form the signal peptide. Residues His38, His142, and His144 each contribute to the Cu cation site. The next 2 membrane-spanning stretches (helical) occupy residues 193-213 (GIFWHVVWMSIGIFWIGVFTA) and 240-260 (ITWVLAILTLALVWGGYRYTE).

In terms of assembly, the soluble ammonia monooxygenase is a nonamer composed of three alpha subunits (AmoA), three beta subunits (AmoB) and three gamma subunits (Cytochrome c1 PetC). Requires Cu(2+) as cofactor.

The protein localises to the cell membrane. It localises to the cytoplasm. It carries out the reaction AH2 + NH4(+) + O2 = hydroxylamine + A + H2O + H(+). With respect to regulation, in vitro, inhibited by acetylene. Functionally, part of the ammonia monooxygenase complex, which catalyzes the oxidation of ammonia to hydroxylamine, the first reaction in the process of ammonia oxidation to nitrite. The polypeptide is Ammonia monooxygenase beta subunit (Nitrosomonas europaea (strain ATCC 19718 / CIP 103999 / KCTC 2705 / NBRC 14298)).